The following is a 396-amino-acid chain: Elongation factor Tu (396 aa).

Residues 10 to 205 (KPHVNIGTIG…AVDSYIPTPE (196 aa)) enclose the tr-type G domain. The interval 19-26 (GHVDHGKT) is G1. Position 19 to 26 (19 to 26 (GHVDHGKT)) interacts with GTP. A Mg(2+)-binding site is contributed by threonine 26. The G2 stretch occupies residues 60–64 (GITIN). The tract at residues 81–84 (DCPG) is G3. GTP-binding positions include 81 to 85 (DCPGH) and 136 to 139 (NKCD). Residues 136–139 (NKCD) are G4. The tract at residues 174 to 176 (SAK) is G5.

This sequence belongs to the TRAFAC class translation factor GTPase superfamily. Classic translation factor GTPase family. EF-Tu/EF-1A subfamily. Monomer.

The protein resides in the cytoplasm. It carries out the reaction GTP + H2O = GDP + phosphate + H(+). In terms of biological role, GTP hydrolase that promotes the GTP-dependent binding of aminoacyl-tRNA to the A-site of ribosomes during protein biosynthesis. This Brevibacillus brevis (strain 47 / JCM 6285 / NBRC 100599) protein is Elongation factor Tu.